The following is a 315-amino-acid chain: GTP cyclohydrolase MptA (315 aa).

It belongs to the GTP cyclohydrolase IV family. In terms of assembly, homodimer. It depends on Fe(2+) as a cofactor.

The enzyme catalyses GTP + H2O = 7,8-dihydroneopterin 2',3'-cyclic phosphate + formate + diphosphate + H(+). Its pathway is cofactor biosynthesis; 5,6,7,8-tetrahydromethanopterin biosynthesis. In terms of biological role, converts GTP to 7,8-dihydro-D-neopterin 2',3'-cyclic phosphate, the first intermediate in the biosynthesis of coenzyme methanopterin. The polypeptide is GTP cyclohydrolase MptA (Methanococcus maripaludis (strain C7 / ATCC BAA-1331)).